The sequence spans 442 residues: tRNA-2-methylthio-N(6)-dimethylallyladenosine synthase (442 aa).

Residues 2–120 (KKVFIRTFGC…LPKMIVDKET (119 aa)) enclose the MTTase N-terminal domain. The [4Fe-4S] cluster site is built by cysteine 11, cysteine 49, cysteine 83, cysteine 157, cysteine 161, and cysteine 164. Residues 143-375 (RVEGGAAFVS…NEVIEAETAR (233 aa)) enclose the Radical SAM core domain. The TRAM domain maps to 378–441 (QTMIGTVQRC…TFSLRGKIVE (64 aa)).

It belongs to the methylthiotransferase family. MiaB subfamily. Monomer. [4Fe-4S] cluster is required as a cofactor.

Its subcellular location is the cytoplasm. It catalyses the reaction N(6)-dimethylallyladenosine(37) in tRNA + (sulfur carrier)-SH + AH2 + 2 S-adenosyl-L-methionine = 2-methylsulfanyl-N(6)-dimethylallyladenosine(37) in tRNA + (sulfur carrier)-H + 5'-deoxyadenosine + L-methionine + A + S-adenosyl-L-homocysteine + 2 H(+). Catalyzes the methylthiolation of N6-(dimethylallyl)adenosine (i(6)A), leading to the formation of 2-methylthio-N6-(dimethylallyl)adenosine (ms(2)i(6)A) at position 37 in tRNAs that read codons beginning with uridine. The protein is tRNA-2-methylthio-N(6)-dimethylallyladenosine synthase of Neisseria gonorrhoeae (strain NCCP11945).